The primary structure comprises 165 residues: Crossover junction endodeoxyribonuclease RuvC (165 aa).

Active-site residues include Asp-8, Glu-66, and Asp-138. 3 residues coordinate Mg(2+): Asp-8, Glu-66, and Asp-138.

It belongs to the RuvC family. Homodimer which binds Holliday junction (HJ) DNA. The HJ becomes 2-fold symmetrical on binding to RuvC with unstacked arms; it has a different conformation from HJ DNA in complex with RuvA. In the full resolvosome a probable DNA-RuvA(4)-RuvB(12)-RuvC(2) complex forms which resolves the HJ. The cofactor is Mg(2+).

It is found in the cytoplasm. It carries out the reaction Endonucleolytic cleavage at a junction such as a reciprocal single-stranded crossover between two homologous DNA duplexes (Holliday junction).. The RuvA-RuvB-RuvC complex processes Holliday junction (HJ) DNA during genetic recombination and DNA repair. Endonuclease that resolves HJ intermediates. Cleaves cruciform DNA by making single-stranded nicks across the HJ at symmetrical positions within the homologous arms, yielding a 5'-phosphate and a 3'-hydroxyl group; requires a central core of homology in the junction. The consensus cleavage sequence is 5'-(A/T)TT(C/G)-3'. Cleavage occurs on the 3'-side of the TT dinucleotide at the point of strand exchange. HJ branch migration catalyzed by RuvA-RuvB allows RuvC to scan DNA until it finds its consensus sequence, where it cleaves and resolves the cruciform DNA. The chain is Crossover junction endodeoxyribonuclease RuvC from Methylococcus capsulatus (strain ATCC 33009 / NCIMB 11132 / Bath).